We begin with the raw amino-acid sequence, 50 residues long: Putative protein HokF (50 aa).

Residues 5-25 (YALVAVIVLCLTVPGFTLLVG) traverse the membrane as a helical segment.

Belongs to the Hok/Gef family.

It localises to the cell inner membrane. Functionally, toxic component of a type I toxin-antitoxin (TA) system. When overexpressed kills cells within minutes; causes collapse of the transmembrane potential and arrest of respiration. Its toxic effect is probably neutralized by an antisense antitoxin Sok RNA. This Escherichia coli O157:H7 protein is Putative protein HokF (hokF).